Consider the following 167-residue polypeptide: Peptidyl-prolyl cis-trans isomerase-like 3 (167 aa).

The 160-residue stretch at 1–160 (MSVTLHTSHG…EPVRIENVTI (160 aa)) folds into the PPIase cyclophilin-type domain.

It belongs to the cyclophilin-type PPIase family. PPIL3 subfamily.

The enzyme catalyses [protein]-peptidylproline (omega=180) = [protein]-peptidylproline (omega=0). In terms of biological role, PPIases accelerate the folding of proteins. It catalyzes the cis-trans isomerization of proline imidic peptide bonds in oligopeptides. This is Peptidyl-prolyl cis-trans isomerase-like 3 (CYP10) from Gibberella zeae (strain ATCC MYA-4620 / CBS 123657 / FGSC 9075 / NRRL 31084 / PH-1) (Wheat head blight fungus).